The following is a 215-amino-acid chain: Pyrrolidone-carboxylate peptidase (215 aa).

Catalysis depends on residues glutamate 80, cysteine 143, and histidine 167.

The protein belongs to the peptidase C15 family. In terms of assembly, homotetramer.

The protein resides in the cytoplasm. The enzyme catalyses Release of an N-terminal pyroglutamyl group from a polypeptide, the second amino acid generally not being Pro.. Removes 5-oxoproline from various penultimate amino acid residues except L-proline. This is Pyrrolidone-carboxylate peptidase from Bacillus cereus (strain Q1).